The sequence spans 454 residues: MKSRFAPSPTGCLHIGGARTALFAWVWAKKQHGKFVLRIEDTDLERSNQASVDAILQGMNWLGLDYDEGPFYQTDRFNRYKQVVRQLLDEKKAYYCECSKERLQILHEDLIKQGKKVRYDGCCRDKNLNDGVVRFNNPEDGLVIFNDVIKGQISINNKELDDLIIVRSDGTPTYNLTVVVDDHDMQIDCVIRGDDHINNTPKQINLYQALGWHLPEFAHLPMILSSDGARLSKRHDAVSIMTYRDAGFLPEALLNYLARLGWSYGDQEIFSMDEIVKLFELKSINKAPASFNQDKLLWLNQKIIKNSSVENLLNNLTWHLQNQAITITNAPNIEAVVQYLQNRCKTLVDMAGEVKMFYQDFDTFDEKLAKRYLKDKTPLKHLFAKLEALRIWKANNIKQAVKEVCFELNISFGKVGQPFRLALSGNGNAGSIDIVAELVGKNKALSRLKMAIDS.

The 'HIGH' region motif lies at 7–17 (PSPTGCLHIGG). Cys-96, Cys-98, Cys-123, and Asp-125 together coordinate Zn(2+). The short motif at 230 to 234 (RLSKR) is the 'KMSKS' region element. An ATP-binding site is contributed by Lys-233.

The protein belongs to the class-I aminoacyl-tRNA synthetase family. Glutamate--tRNA ligase type 1 subfamily. As to quaternary structure, monomer. Zn(2+) is required as a cofactor.

It localises to the cytoplasm. The enzyme catalyses tRNA(Glu) + L-glutamate + ATP = L-glutamyl-tRNA(Glu) + AMP + diphosphate. Its function is as follows. Catalyzes the attachment of glutamate to tRNA(Glu) in a two-step reaction: glutamate is first activated by ATP to form Glu-AMP and then transferred to the acceptor end of tRNA(Glu). The protein is Glutamate--tRNA ligase of Ruthia magnifica subsp. Calyptogena magnifica.